A 480-amino-acid chain; its full sequence is RNA-binding protein 42 (480 aa).

The disordered stretch occupies residues 1-30 (MAGAGPAPGLPGAGGPVVPGPGAGIPGKSG). Alanine 2 is subject to N-acetylalanine. Gly residues predominate over residues 11-27 (PGAGGPVVPGPGAGIPG). Serine 135 carries the phosphoserine modification. Residues arginine 153, arginine 158, arginine 168, and arginine 181 each carry the asymmetric dimethylarginine modification. A necessary for interaction with HNRNPK region spans residues 236-480 (ELGLGLGLGL…QKEKKKLGLR (245 aa)). A disordered region spans residues 319–356 (SLRPRPRPPRPEPPPGLMALEVPEPLGEDKKKGKPEKL). The segment covering 345–356 (GEDKKKGKPEKL) has biased composition (basic and acidic residues). The 79-residue stretch at 381 to 459 (FRIFCGDLGN…RPIKLRKSMW (79 aa)) folds into the RRM domain.

Belongs to the RRM RBM42 family. In terms of assembly, interacts with HNRNPK.

It is found in the nucleus. The protein localises to the cytoplasm. Functionally, binds (via the RRM domain) to the 3'-untranslated region (UTR) of CDKN1A mRNA. The sequence is that of RNA-binding protein 42 (RBM42) from Homo sapiens (Human).